A 322-amino-acid chain; its full sequence is N-acetyl-gamma-glutamyl-phosphate reductase (322 aa).

C132 is a catalytic residue.

This sequence belongs to the NAGSA dehydrogenase family. Type 1 subfamily.

Its subcellular location is the cytoplasm. The catalysed reaction is N-acetyl-L-glutamate 5-semialdehyde + phosphate + NADP(+) = N-acetyl-L-glutamyl 5-phosphate + NADPH + H(+). It functions in the pathway amino-acid biosynthesis; L-arginine biosynthesis; N(2)-acetyl-L-ornithine from L-glutamate: step 3/4. In terms of biological role, catalyzes the NADPH-dependent reduction of N-acetyl-5-glutamyl phosphate to yield N-acetyl-L-glutamate 5-semialdehyde. This chain is N-acetyl-gamma-glutamyl-phosphate reductase, found in Parabacteroides distasonis (strain ATCC 8503 / DSM 20701 / CIP 104284 / JCM 5825 / NCTC 11152).